We begin with the raw amino-acid sequence, 156 residues long: Small ribosomal subunit protein uS7 (156 aa).

This sequence belongs to the universal ribosomal protein uS7 family. In terms of assembly, part of the 30S ribosomal subunit. Contacts proteins S9 and S11.

One of the primary rRNA binding proteins, it binds directly to 16S rRNA where it nucleates assembly of the head domain of the 30S subunit. Is located at the subunit interface close to the decoding center, probably blocks exit of the E-site tRNA. The chain is Small ribosomal subunit protein uS7 from Listeria innocua serovar 6a (strain ATCC BAA-680 / CLIP 11262).